The following is a 445-amino-acid chain: MLAYKISPSSISGSVCVPPSKSHTLRAIFLASIAQGTSTIYNALTSPDSEAMIQACEQLGAKIQKKSSFLEITGTPHLSLPPNTIINAGSSGIVFRFFTALAAIFSEKVTITGSSQLQRRPIAPLIHALENFGATFSYEGAPYTLSFTVSGPISSGYTEVSGDDSQYASALAMACSLAEGPFSFTIVNPKERPWFDLTLWWLEQLAMPYSQSGDTYSFLGKSRPRTFSYTVGGDFSSAAFLAAAALLSKSPHPTYLNDLNSNDAQGDKELFYLLQKLGADITFENDSVIVFSSTFSGGNIDMDPFIDALPILAVLCCFATSPSHLYNARGAKDKESDRIIAITEELQKMGACIQPCHNGLLINPSPLYGASMHSHNDHRIAMALSVAAMNASGDSIIHDTECVKKTFPNFIQALNSLHANVQEHHEHISMRAANSRQDLVRQGFC.

3-phosphoshikimate contacts are provided by lysine 21, serine 22, and arginine 26. Phosphoenolpyruvate is bound at residue lysine 21. Residues glycine 92 and arginine 120 each coordinate phosphoenolpyruvate. 3-phosphoshikimate-binding residues include serine 165, glutamine 166, aspartate 307, and lysine 334. Phosphoenolpyruvate is bound at residue glutamine 166. The Proton acceptor role is filled by aspartate 307. 3 residues coordinate phosphoenolpyruvate: arginine 338, arginine 379, and lysine 405.

It belongs to the EPSP synthase family. Monomer.

Its subcellular location is the cytoplasm. It catalyses the reaction 3-phosphoshikimate + phosphoenolpyruvate = 5-O-(1-carboxyvinyl)-3-phosphoshikimate + phosphate. It participates in metabolic intermediate biosynthesis; chorismate biosynthesis; chorismate from D-erythrose 4-phosphate and phosphoenolpyruvate: step 6/7. Functionally, catalyzes the transfer of the enolpyruvyl moiety of phosphoenolpyruvate (PEP) to the 5-hydroxyl of shikimate-3-phosphate (S3P) to produce enolpyruvyl shikimate-3-phosphate and inorganic phosphate. The polypeptide is 3-phosphoshikimate 1-carboxyvinyltransferase (Chlamydia felis (strain Fe/C-56) (Chlamydophila felis)).